A 263-amino-acid polypeptide reads, in one-letter code: Ribosomal RNA large subunit methyltransferase E (263 aa).

The interval 1 to 34 (MSSAEGPKSGGGSKGSKSEASSRVRGSAPTGSRD) is disordered. S-adenosyl-L-methionine-binding residues include G102, W104, D126, D142, and D166. K206 acts as the Proton acceptor in catalysis.

Belongs to the class I-like SAM-binding methyltransferase superfamily. RNA methyltransferase RlmE family.

It localises to the cytoplasm. It carries out the reaction uridine(2552) in 23S rRNA + S-adenosyl-L-methionine = 2'-O-methyluridine(2552) in 23S rRNA + S-adenosyl-L-homocysteine + H(+). Specifically methylates the uridine in position 2552 of 23S rRNA at the 2'-O position of the ribose in the fully assembled 50S ribosomal subunit. The protein is Ribosomal RNA large subunit methyltransferase E of Rhodospirillum rubrum (strain ATCC 11170 / ATH 1.1.1 / DSM 467 / LMG 4362 / NCIMB 8255 / S1).